Consider the following 661-residue polypeptide: Sperm transmembrane protein 9 (661 aa).

A signal peptide spans 1–16 (MNVILVLVVLFFAGDC). Residues 17-618 (AKIRKIIDFL…MTNRLMKNYE (602 aa)) are Extracellular-facing. One can recognise an EGF-like 1 domain in the interval 52–90 (NFNPCLENPKICSNRGKCLHENGNFYCICPVTHYGKTCE). 3 disulfide bridges follow: cysteine 56/cysteine 69, cysteine 63/cysteine 78, and cysteine 80/cysteine 89. Asparagine 105, asparagine 106, asparagine 134, and asparagine 190 each carry an N-linked (GlcNAc...) asparagine glycan. The region spanning 210–259 (QISACFDTQCDNGGICEDVVDWKTKTVTATCKCPSAIELIGGTVTGENCE) is the EGF-like 2 domain. 3 cysteine pairs are disulfide-bonded: cysteine 214–cysteine 225, cysteine 219–cysteine 240, and cysteine 242–cysteine 258. N-linked (GlcNAc...) asparagine glycosylation is found at asparagine 279, asparagine 290, asparagine 316, and asparagine 338. A Cell attachment site motif is present at residues 377–379 (RGD). EGF-like domains lie at 377-414 (RGDR…EKCE), 519-557 (HTNP…SLCE), and 559-600 (VDDS…LDCN). 9 disulfide bridges follow: cysteine 385–cysteine 402, cysteine 393–cysteine 404, cysteine 413–cysteine 419, cysteine 523–cysteine 534, cysteine 528–cysteine 545, cysteine 547–cysteine 556, cysteine 563–cysteine 576, cysteine 571–cysteine 588, and cysteine 590–cysteine 599. N-linked (GlcNAc...) asparagine glycosylation occurs at asparagine 549. Residues 619-639 (FSLPLVACFVSLAILLPVIVI) form a helical membrane-spanning segment. The Cytoplasmic segment spans residues 640–661 (SRRRQGRVEEAKKTSEVKTENP).

As to expression, expressed in spermatids, during spermogenesis expression is primarily localized to the pseudopod.

It localises to the cytoplasm. The protein localises to the membrane. Its function is as follows. Required for fertilization. May be required for cell adhesion and/or function as a signaling molecule. The chain is Sperm transmembrane protein 9 (spe-9) from Caenorhabditis elegans.